A 336-amino-acid chain; its full sequence is Mediator of RNA polymerase II transcription subunit 4 (336 aa).

Disordered stretches follow at residues 1–45 (MNST…SNVV) and 59–85 (NVEE…QDEA). Positions 154-192 (QQAAQTIAALERVSEGLDDKIRDMIRKLAECRRELRNYQ) form a coiled coil. The interval 281–336 (PVANGVAQNHNNGYAMERRLSTGYGSDNDGDTNMNGRSGLAGLDIFDDDDDDDDDD) is disordered. Residues 325–336 (IFDDDDDDDDDD) show a composition bias toward acidic residues.

It belongs to the Mediator complex subunit 4 family. As to quaternary structure, component of the Mediator complex.

It localises to the nucleus. Component of the Mediator complex, a coactivator involved in the regulated transcription of nearly all RNA polymerase II-dependent genes. Mediator functions as a bridge to convey information from gene-specific regulatory proteins to the basal RNA polymerase II transcription machinery. Mediator is recruited to promoters by direct interactions with regulatory proteins and serves as a scaffold for the assembly of a functional preinitiation complex with RNA polymerase II and the general transcription factors. The protein is Mediator of RNA polymerase II transcription subunit 4 (MED4) of Yarrowia lipolytica (strain CLIB 122 / E 150) (Yeast).